The primary structure comprises 282 residues: Protoheme IX farnesyltransferase (282 aa).

9 consecutive transmembrane segments (helical) span residues 9–29, 39–59, 79–99, 102–122, 139–159, 165–185, 210–230, 231–251, and 261–281; these read LAKP…FLLA, LPLF…GCVF, LVTG…LLIL, LVLY…GFIV, VLGG…VVNI, LALF…IAML, IMLF…VLGS, ADLF…YKSI, and VFAK…CLTM.

It belongs to the UbiA prenyltransferase family. Protoheme IX farnesyltransferase subfamily.

The protein resides in the cell inner membrane. It carries out the reaction heme b + (2E,6E)-farnesyl diphosphate + H2O = Fe(II)-heme o + diphosphate. It functions in the pathway porphyrin-containing compound metabolism; heme O biosynthesis; heme O from protoheme: step 1/1. Converts heme B (protoheme IX) to heme O by substitution of the vinyl group on carbon 2 of heme B porphyrin ring with a hydroxyethyl farnesyl side group. This chain is Protoheme IX farnesyltransferase, found in Francisella tularensis subsp. novicida (strain U112).